A 635-amino-acid chain; its full sequence is Probable clathrin assembly protein At4g32285 (635 aa).

Positions V23–R159 constitute an ENTH domain. The interval R157–F208 is disordered. Over residues S165–D174 the composition is skewed to low complexity. Basic and acidic residues predominate over residues G175–R184. A Phosphoserine modification is found at S207. T224 is subject to Phosphothreonine. Basic and acidic residues predominate over residues A357 to E369. The tract at residues A357–Q412 is disordered. The segment covering L390–Q409 has biased composition (pro residues).

The protein resides in the membrane. Its subcellular location is the clathrin-coated pit. It localises to the golgi apparatus. It is found in the cytoplasmic vesicle. The protein localises to the clathrin-coated vesicle. This Arabidopsis thaliana (Mouse-ear cress) protein is Probable clathrin assembly protein At4g32285.